The chain runs to 351 residues: Epoxyqueuosine reductase (351 aa).

Aspartate 131 functions as the Proton donor in the catalytic mechanism. Residues glutamate 177 to arginine 205 form the 4Fe-4S ferredoxin-type domain. [4Fe-4S] cluster is bound by residues cysteine 185, cysteine 188, cysteine 191, cysteine 195, cysteine 211, cysteine 237, cysteine 240, and cysteine 244.

It belongs to the QueG family. Monomer. It depends on cob(II)alamin as a cofactor. The cofactor is [4Fe-4S] cluster.

It localises to the cytoplasm. It carries out the reaction epoxyqueuosine(34) in tRNA + AH2 = queuosine(34) in tRNA + A + H2O. It functions in the pathway tRNA modification; tRNA-queuosine biosynthesis. Functionally, catalyzes the conversion of epoxyqueuosine (oQ) to queuosine (Q), which is a hypermodified base found in the wobble positions of tRNA(Asp), tRNA(Asn), tRNA(His) and tRNA(Tyr). The polypeptide is Epoxyqueuosine reductase (Lactococcus garvieae (strain Lg2) (Enterococcus seriolicida)).